Consider the following 61-residue polypeptide: MLNIFSLICICLNSALYSSSLFFAKLPEAYAFLNPIVDLMPVIPLFFFLLAFVWQAAVSFR.

The propeptide occupies 1 to 24 (MLNIFSLICICLNSALYSSSLFFA). A helical membrane pass occupies residues 40 to 60 (MPVIPLFFFLLAFVWQAAVSF).

This sequence belongs to the PsbK family. PSII is composed of 1 copy each of membrane proteins PsbA, PsbB, PsbC, PsbD, PsbE, PsbF, PsbH, PsbI, PsbJ, PsbK, PsbL, PsbM, PsbT, PsbX, PsbY, PsbZ, Psb30/Ycf12, at least 3 peripheral proteins of the oxygen-evolving complex and a large number of cofactors. It forms dimeric complexes.

The protein localises to the plastid. It localises to the chloroplast thylakoid membrane. Its function is as follows. One of the components of the core complex of photosystem II (PSII). PSII is a light-driven water:plastoquinone oxidoreductase that uses light energy to abstract electrons from H(2)O, generating O(2) and a proton gradient subsequently used for ATP formation. It consists of a core antenna complex that captures photons, and an electron transfer chain that converts photonic excitation into a charge separation. The chain is Photosystem II reaction center protein K from Panax ginseng (Korean ginseng).